We begin with the raw amino-acid sequence, 507 residues long: Maturase K (507 aa).

This sequence belongs to the intron maturase 2 family. MatK subfamily.

The protein localises to the plastid. Its subcellular location is the chloroplast. Its function is as follows. Usually encoded in the trnK tRNA gene intron. Probably assists in splicing its own and other chloroplast group II introns. This chain is Maturase K, found in Ranunculus acris (Meadow buttercup).